A 287-amino-acid polypeptide reads, in one-letter code: Thiazole synthase (287 aa).

K111 acts as the Schiff-base intermediate with DXP in catalysis. Residues G172, 203–204 (AG), and 225–226 (NT) contribute to the 1-deoxy-D-xylulose 5-phosphate site. Positions 268–287 (PQEGVISTRPYGSQADEIGS) are disordered.

The protein belongs to the ThiG family. As to quaternary structure, homotetramer. Forms heterodimers with either ThiH or ThiS.

It localises to the cytoplasm. It catalyses the reaction [ThiS sulfur-carrier protein]-C-terminal-Gly-aminoethanethioate + 2-iminoacetate + 1-deoxy-D-xylulose 5-phosphate = [ThiS sulfur-carrier protein]-C-terminal Gly-Gly + 2-[(2R,5Z)-2-carboxy-4-methylthiazol-5(2H)-ylidene]ethyl phosphate + 2 H2O + H(+). Its pathway is cofactor biosynthesis; thiamine diphosphate biosynthesis. Catalyzes the rearrangement of 1-deoxy-D-xylulose 5-phosphate (DXP) to produce the thiazole phosphate moiety of thiamine. Sulfur is provided by the thiocarboxylate moiety of the carrier protein ThiS. In vitro, sulfur can be provided by H(2)S. In Rhodopirellula baltica (strain DSM 10527 / NCIMB 13988 / SH1), this protein is Thiazole synthase.